Consider the following 294-residue polypeptide: Putative immediate early glycoprotein (294 aa).

Residues Met-1–Thr-21 form the signal peptide. The chain crosses the membrane as a helical span at residues Leu-262–Ile-282.

The protein belongs to the herpesviridae immediate early glycoprotein family.

The protein localises to the host membrane. The protein is Putative immediate early glycoprotein (U18) of Homo sapiens (Human).